The primary structure comprises 240 residues: Uridylate kinase (240 aa).

Residue K12–G15 participates in ATP binding. Position 54 (G54) interacts with UMP. G55 and R59 together coordinate ATP. UMP contacts are provided by residues D74 and T135–T142. ATP-binding residues include T162, Y168, and D171.

This sequence belongs to the UMP kinase family. As to quaternary structure, homohexamer.

It is found in the cytoplasm. It carries out the reaction UMP + ATP = UDP + ADP. It participates in pyrimidine metabolism; CTP biosynthesis via de novo pathway; UDP from UMP (UMPK route): step 1/1. Inhibited by UTP. Catalyzes the reversible phosphorylation of UMP to UDP. This chain is Uridylate kinase, found in Xanthomonas euvesicatoria pv. vesicatoria (strain 85-10) (Xanthomonas campestris pv. vesicatoria).